A 222-amino-acid polypeptide reads, in one-letter code: MKGLLHFLLAKIILLALASSFVYCYEPSPLQDYCVATNETNGVYVNGKFCKDPKCVTANDFYTSGLNVPGNTSTGPGVKITVVDVKRMPGLNTLGVDIARIDFAPGGLYPPHTHPRGSEIFLVMKGKLFVGFVSSNEYNYTLFTKVLYPGDVFVFPKGLIQFHANIGKTNAVVIAATGSQNPGRIIIGNAVFGSKPLIDPKVLAKAFALDFNKVKYFQAVFS.

A signal peptide spans 1 to 24 (MKGLLHFLLAKIILLALASSFVYC). C34 and C50 are disulfide-bonded. N-linked (GlcNAc...) asparagine glycosylation is found at N38 and N71. The region spanning 64-215 (SGLNVPGNTS…AFALDFNKVK (152 aa)) is the Cupin type-1 domain. Positions 112, 114, and 119 each coordinate Mn(2+). N139 is a glycosylation site (N-linked (GlcNAc...) asparagine). H163 provides a ligand contact to Mn(2+).

This sequence belongs to the germin family. Oligomer (believed to be a pentamer but probably hexamer).

The protein resides in the secreted. The protein localises to the extracellular space. It localises to the apoplast. In terms of biological role, may play a role in plant defense. Probably has no oxalate oxidase activity even if the active site is conserved. The polypeptide is Germin-like protein subfamily 1 member 5 (Arabidopsis thaliana (Mouse-ear cress)).